Consider the following 350-residue polypeptide: Deoxyhypusine synthase-like protein (350 aa).

The protein belongs to the deoxyhypusine synthase family.

The protein is Deoxyhypusine synthase-like protein of Chlorobaculum tepidum (strain ATCC 49652 / DSM 12025 / NBRC 103806 / TLS) (Chlorobium tepidum).